A 358-amino-acid polypeptide reads, in one-letter code: Stearoyl-CoA desaturase 2 (358 aa).

Topologically, residues 1-71 are cytoplasmic; sequence MPAHILQEIS…EGPPPKLEYV (71 aa). A disordered region spans residues 16-39; that stretch reads TTTITAPPSGGQQNGGEKFEKSSH. A helical transmembrane segment spans residues 72–92; the sequence is WRNIILMALLHLGALYGITLV. Asn74 contacts substrate. Residues 93 to 96 are Lumenal-facing; that stretch reads PSCK. A helical transmembrane segment spans residues 97-117; it reads LYTCLFAYLYYVISALGITAG. Over 118 to 216 the chain is Cytoplasmic; sequence AHRLWSHRTY…EKLVMFQRRY (99 aa). Residues His119 and His124 each coordinate Fe cation. Residues 119-124 carry the Histidine box-1 motif; it reads HRLWSH. 3 residues coordinate substrate: Asn147, Arg154, and Asp155. Residues His156, His159, and His160 each contribute to the Fe cation site. The short motif at 156–160 is the Histidine box-2 element; that stretch reads HRAHH. The substrate site is built by Arg187 and Lys188. Residues 217–236 form a helical membrane-spanning segment; that stretch reads YKPGLLLMCFVLPTLVPWYC. Topologically, residues 237-240 are lumenal; that stretch reads WGET. Residues 241-262 form a helical membrane-spanning segment; it reads FVNSLCVSTFLRYAVVLNATWL. Trp261 contributes to the substrate binding site. The Cytoplasmic segment spans residues 263–358; it reads VNSAAHLYGY…RTGDGSCKSG (96 aa). The Fe cation site is built by His268, His297, His300, and His301. The Histidine box-3 motif lies at 297 to 301; that stretch reads HNYHH.

The protein belongs to the fatty acid desaturase type 1 family. The cofactor is Fe(2+). Detected in brain and skin. Highly expressed in brain, and detected at low levels in heart, stomach, lung and testis. Detected both in dermis and epidermis.

The protein localises to the endoplasmic reticulum membrane. It localises to the microsome membrane. It catalyses the reaction octadecanoyl-CoA + 2 Fe(II)-[cytochrome b5] + O2 + 2 H(+) = (9Z)-octadecenoyl-CoA + 2 Fe(III)-[cytochrome b5] + 2 H2O. It carries out the reaction hexadecanoyl-CoA + 2 Fe(II)-[cytochrome b5] + O2 + 2 H(+) = (9Z)-hexadecenoyl-CoA + 2 Fe(III)-[cytochrome b5] + 2 H2O. Functionally, stearoyl-CoA desaturase that utilizes O(2) and electrons from reduced cytochrome b5 to introduce the first double bond into saturated fatty acyl-CoA substrates. Catalyzes the insertion of a cis double bond at the delta-9 position into fatty acyl-CoA substrates including palmitoyl-CoA and stearoyl-CoA. Gives rise to a mixture of 16:1 and 18:1 unsaturated fatty acids. Contributes to the biosynthesis of membrane phospholipids, cholesterol esters and triglycerides, especially during embryonic development and in neonates. Important for normal permeability barrier function of the skin in neonates. This chain is Stearoyl-CoA desaturase 2 (Scd2), found in Mus musculus (Mouse).